A 218-amino-acid chain; its full sequence is Small ribosomal subunit protein uS3 (218 aa).

The KH type-2 domain occupies 38–106; the sequence is IRKFIATKLA…RVHINIVEIK (69 aa).

The protein belongs to the universal ribosomal protein uS3 family. As to quaternary structure, part of the 30S ribosomal subunit. Forms a tight complex with proteins S10 and S14.

Binds the lower part of the 30S subunit head. Binds mRNA in the 70S ribosome, positioning it for translation. The protein is Small ribosomal subunit protein uS3 of Enterococcus faecalis (strain ATCC 700802 / V583).